The primary structure comprises 312 residues: uncharacterized protein (312 aa).

Positions 1–19 are cleaved as a signal peptide; that stretch reads MFSKYLVTASSLFVALTSA.

This is an uncharacterized protein from Saccharomyces cerevisiae (strain ATCC 204508 / S288c) (Baker's yeast).